The following is a 1701-amino-acid chain: Coiled-coil domain-containing protein 180 (1701 aa).

The interval Met-1–Pro-35 is disordered. Positions Gln-171–Glu-198 form a coiled coil. Disordered stretches follow at residues Glu-657–Glu-808, His-1272–Arg-1291, and Gly-1319–Lys-1354. The segment covering Gln-661–Gln-671 has biased composition (basic residues). Positions Gly-672–Glu-682 are enriched in basic and acidic residues. Positions Ser-683–Arg-692 are enriched in polar residues. A compositionally biased stretch (acidic residues) spans Glu-696–Met-705. A compositionally biased stretch (basic and acidic residues) spans Glu-755–Glu-766. Residues Val-757–Glu-804 adopt a coiled-coil conformation. Over residues Ser-767–Glu-808 the composition is skewed to acidic residues.

The polypeptide is Coiled-coil domain-containing protein 180 (CCDC180) (Homo sapiens (Human)).